A 534-amino-acid polypeptide reads, in one-letter code: NAD(P)H-quinone oxidoreductase chain 4 (534 aa).

Helical transmembrane passes span 6–26 (FPWL…LPFI), 38–58 (WYAL…FYTQ), 91–111 (MPLI…SWPV), 117–137 (LFYF…AVQD), 138–158 (LLVF…LLSI), 171–191 (FILY…AMAF), 214–234 (LLCY…VPLH), 245–265 (TAPV…YALI), 279–299 (FAPA…LTSF), 316–336 (MGFV…GAVL), 337–357 (QMVS…ATYD), 377–399 (IFAM…GFVA), 419–439 (VPVV…LLSM), and 466–486 (IFVI…PKII).

This sequence belongs to the complex I subunit 4 family.

The protein resides in the cellular thylakoid membrane. It catalyses the reaction a plastoquinone + NADH + (n+1) H(+)(in) = a plastoquinol + NAD(+) + n H(+)(out). The catalysed reaction is a plastoquinone + NADPH + (n+1) H(+)(in) = a plastoquinol + NADP(+) + n H(+)(out). In terms of biological role, NDH-1 shuttles electrons from NAD(P)H, via FMN and iron-sulfur (Fe-S) centers, to quinones in the respiratory chain. The immediate electron acceptor for the enzyme in this species is believed to be plastoquinone. Couples the redox reaction to proton translocation (for every two electrons transferred, four hydrogen ions are translocated across the cytoplasmic membrane), and thus conserves the redox energy in a proton gradient. This chain is NAD(P)H-quinone oxidoreductase chain 4, found in Acaryochloris marina (strain MBIC 11017).